A 319-amino-acid polypeptide reads, in one-letter code: Acetyl-coenzyme A carboxylase carboxyl transferase subunit alpha (319 aa).

The 262-residue stretch at 32–293 folds into the CoA carboxyltransferase C-terminal domain; that stretch reads NVDTEVRALE…KAVLLNELEA (262 aa).

The protein belongs to the AccA family. In terms of assembly, acetyl-CoA carboxylase is a heterohexamer composed of biotin carboxyl carrier protein (AccB), biotin carboxylase (AccC) and two subunits each of ACCase subunit alpha (AccA) and ACCase subunit beta (AccD).

It is found in the cytoplasm. It catalyses the reaction N(6)-carboxybiotinyl-L-lysyl-[protein] + acetyl-CoA = N(6)-biotinyl-L-lysyl-[protein] + malonyl-CoA. Its pathway is lipid metabolism; malonyl-CoA biosynthesis; malonyl-CoA from acetyl-CoA: step 1/1. In terms of biological role, component of the acetyl coenzyme A carboxylase (ACC) complex. First, biotin carboxylase catalyzes the carboxylation of biotin on its carrier protein (BCCP) and then the CO(2) group is transferred by the carboxyltransferase to acetyl-CoA to form malonyl-CoA. The chain is Acetyl-coenzyme A carboxylase carboxyl transferase subunit alpha from Xylella fastidiosa (strain M12).